The primary structure comprises 400 residues: Large envelope protein (400 aa).

N-acetylmethionine is present on Met-1. Disordered stretches follow at residues 1-53 (MGGW…DHWP), 88-118 (VPVA…SHPQ), and 145-169 (GSSS…SRTG). Gly-2 is lipidated: N-myristoyl glycine; by host. Positions 2–119 (GGWSSKPRQG…PPLRDSHPQA (118 aa)) are pre-S1. The tract at residues 2-174 (GGWSSKPRQG…SSRTGDPAPN (173 aa)) is pre-S. Topologically, residues 2-181 (GGWSSKPRQG…APNMENTTSG (180 aa)) are virion surface; in external conformation. Residues 2 to 253 (GGWSSKPRQG…PGYRWMCLRR (252 aa)) lie on the Intravirion; in internal conformation side of the membrane. Trp-4 carries N-linked (GlcNAc...) asparagine glycosylation. Residues 96–106 (STNRQSGRQPT) are compositionally biased toward polar residues. Positions 120–174 (MQWNSTTFHQALLDPRVRGLYFPAGGSSSGTVNPVPTTASPISSISSRTGDPAPN) are pre-S2. Residues 155–166 (PTTASPISSISS) are compositionally biased toward low complexity. A helical transmembrane segment spans residues 182 to 202 (FLGPLLVLQAGFFLLTRILTI). The Intravirion; in external conformation portion of the chain corresponds to 203–253 (PQSLDSWWTSLNFLGGAPTCPGQNSQSPTSNHSPTSCPPICPGYRWMCLRR). A helical membrane pass occupies residues 254–274 (FIIFLFILLLCLIFLLVLLDY). The Virion surface portion of the chain corresponds to 275 to 348 (QGMLPVCPLL…GASVRFSWLS (74 aa)). An N-linked (GlcNAc...) asparagine; by host glycan is attached at Asn-320. The helical transmembrane segment at 349 to 369 (LLVPFVQWFVGLSPTVWLSVI) threads the bilayer. Residues 370–375 (WMMWYW) are Intravirion-facing. A helical membrane pass occupies residues 376–398 (GPSLYNILSPFLPLLPIFFCLWV). Residues 399-400 (YI) lie on the Virion surface side of the membrane.

This sequence belongs to the orthohepadnavirus major surface antigen family. In its internal form (Li-HBsAg), interacts with the capsid protein and with the isoform S. Interacts with host chaperone CANX. In terms of assembly, associates with host chaperone CANX through its pre-S2 N glycan; this association may be essential for isoform M proper secretion. As to quaternary structure, interacts with isoform L. Interacts with the antigens of satellite virus HDV (HDVAgs); this interaction is required for encapsidation of HDV genomic RNA. Post-translationally, isoform M is N-terminally acetylated by host at a ratio of 90%, and N-glycosylated by host at the pre-S2 region. In terms of processing, myristoylated.

The protein resides in the virion membrane. Its function is as follows. The large envelope protein exists in two topological conformations, one which is termed 'external' or Le-HBsAg and the other 'internal' or Li-HBsAg. In its external conformation the protein attaches the virus to cell receptors and thereby initiating infection. This interaction determines the species specificity and liver tropism. This attachment induces virion internalization predominantly through caveolin-mediated endocytosis. The large envelope protein also assures fusion between virion membrane and endosomal membrane. In its internal conformation the protein plays a role in virion morphogenesis and mediates the contact with the nucleocapsid like a matrix protein. Functionally, the middle envelope protein plays an important role in the budding of the virion. It is involved in the induction of budding in a nucleocapsid independent way. In this process the majority of envelope proteins bud to form subviral lipoprotein particles of 22 nm of diameter that do not contain a nucleocapsid. The sequence is that of Large envelope protein from Hepatitis B virus genotype C subtype adr (strain Japan/adr4/1983) (HBV-C).